The sequence spans 594 residues: Lysine--tRNA ligase cla4 (594 aa).

Positions M1–A62 are disordered. The segment covering T18–K42 has biased composition (basic and acidic residues).

The protein belongs to the class-II aminoacyl-tRNA synthetase family. In terms of assembly, homodimer.

The enzyme catalyses tRNA(Lys) + L-lysine + ATP = L-lysyl-tRNA(Lys) + AMP + diphosphate. Its function is as follows. Involved in self-resistance to cladosporin since this product is an inhibitor of lysyl-tRNA synthetase. Cla4 may not be inhibited by cladosporin, thereby imparting cladosporin resistance. When cladosporin biosynthesis is switched on, transcription of cla4 will then be necessary for continued protein synthesis in C.cladosporioides. This Cladosporium cladosporioides protein is Lysine--tRNA ligase cla4.